We begin with the raw amino-acid sequence, 367 residues long: MEITNVTEYDAIAKQKLPKMVYDYYASGAEDQWTLQENRNAFARILFRPRILIDVSKIDMTTTVLGFKISMPIMVAPTAMQKMAHPDGEYATARAASAAGTIMTLSSWATSSVEEVASTGPGIRFFQLYVYKNRNVVEQLVRRAERAGFKAIALTVDTPRLGRRESDIKNRFTLPPNLTLKNFEGLDLGKMDEANDSGLASYVAGQIDRTLSWKDVQWLQTITKLPILVKGVLTGEDARIAIQAGAAGIIVSNHGARQLDYVPATISALEEVVKATQGRIPVFLDGGVRRGTDVFKALALGASGIFIGRPVVFSLAAEGEAGVRKVLQMLRDEFELTMALSGCRSLKEISRNHITTEWDTPRPSARL.

M1 is subject to N-acetylmethionine. Y24 contacts glyoxylate. Residues 77 to 79, S106, 127 to 129, and T155 contribute to the FMN site; these read PTA and QLY. Y129 contacts glyoxylate. R164 contributes to the glyoxylate binding site. Residues K230 and S252 each coordinate FMN. Glyoxylate is bound by residues H254 and R257. Catalysis depends on H254, which acts as the Proton acceptor. FMN contacts are provided by residues 285-289 and 308-309; these read DGGVR and GR.

Belongs to the FMN-dependent alpha-hydroxy acid dehydrogenase family. As to quaternary structure, homotetramer. Requires FMN as cofactor.

The protein resides in the peroxisome. The enzyme catalyses glycolate + O2 = glyoxylate + H2O2. It functions in the pathway photosynthesis; photorespiration; glycine from 2-phosphoglycolate: step 2/3. In terms of biological role, catalyzes the oxidation of glycolate to glyoxylate, with a reduction of O2 to H2O2. Is a key enzyme in photorespiration in green plants. This Arabidopsis thaliana (Mouse-ear cress) protein is Glycolate oxidase 1 (GLO1).